Reading from the N-terminus, the 284-residue chain is ATP synthase subunit a (284 aa).

5 helical membrane passes run 47–67 (AFHL…LIFF), 108–128 (VAPL…MDLV), 156–176 (VPTA…ILII), 233–253 (MIFI…SLPW), and 254–274 (AIFH…LVIV).

The protein belongs to the ATPase A chain family. In terms of assembly, F-type ATPases have 2 components, CF(1) - the catalytic core - and CF(0) - the membrane proton channel. CF(1) has five subunits: alpha(3), beta(3), gamma(1), delta(1), epsilon(1). CF(0) has three main subunits: a(1), b(2) and c(9-12). The alpha and beta chains form an alternating ring which encloses part of the gamma chain. CF(1) is attached to CF(0) by a central stalk formed by the gamma and epsilon chains, while a peripheral stalk is formed by the delta and b chains.

It is found in the cell inner membrane. In terms of biological role, key component of the proton channel; it plays a direct role in the translocation of protons across the membrane. This Ruthia magnifica subsp. Calyptogena magnifica protein is ATP synthase subunit a.